We begin with the raw amino-acid sequence, 313 residues long: Zinc transporter ZitB (313 aa).

At 1-20 the chain is on the cytoplasmic side; it reads MAHSHSHTSSHLPEDNNARR. A helical membrane pass occupies residues 21–41; that stretch reads LLYAFGVTAGFMLVEVVGGFL. The Periplasmic portion of the chain corresponds to 42–47; sequence SGSLAL. The chain crosses the membrane as a helical span at residues 48-68; it reads LADAGHMLTDTAALLFALLAV. Residues 69 to 89 lie on the Cytoplasmic side of the membrane; it reads QFSRRPPTIRHTFGWLRLTTL. Residues 90-110 traverse the membrane as a helical segment; sequence AAFVNAIALVVITILIVWEAI. At 111–121 the chain is on the periplasmic side; the sequence is ERFRTPRPVEG. The chain crosses the membrane as a helical span at residues 122-142; that stretch reads GMMMAIAVAGLLANILSFWLL. Topologically, residues 143–159 are cytoplasmic; sequence HHGSEEKNLNVRAAALH. Residues 160-180 form a helical membrane-spanning segment; that stretch reads VLGDLLGSVGAIIAALIIIWT. Gly181 is a topological domain (periplasmic). Residues 182–202 traverse the membrane as a helical segment; it reads WTPADPILSILVSLLVLRSAW. Over 203–313 the chain is Cytoplasmic; that stretch reads RLLKDSVNEL…GVSGHSHHHH (111 aa).

Belongs to the cation diffusion facilitator (CDF) transporter (TC 2.A.4) family. SLC30A subfamily.

The protein localises to the cell inner membrane. Functionally, involved in zinc efflux across the cytoplasmic membrane, thus reducing zinc accumulation in the cytoplasm and rendering bacteria more resistant to zinc. It may contribute to zinc homeostasis at low concentrations of zinc. This chain is Zinc transporter ZitB (zitB), found in Shigella flexneri.